Consider the following 204-residue polypeptide: ATP synthase subunit b 2 (204 aa).

Residues 50–70 (IFWLAVTFGLLLFLMSKVALP) form a helical membrane-spanning segment.

Belongs to the ATPase B chain family. As to quaternary structure, F-type ATPases have 2 components, F(1) - the catalytic core - and F(0) - the membrane proton channel. F(1) has five subunits: alpha(3), beta(3), gamma(1), delta(1), epsilon(1). F(0) has three main subunits: a(1), b(2) and c(10-14). The alpha and beta chains form an alternating ring which encloses part of the gamma chain. F(1) is attached to F(0) by a central stalk formed by the gamma and epsilon chains, while a peripheral stalk is formed by the delta and b chains.

The protein resides in the cell inner membrane. F(1)F(0) ATP synthase produces ATP from ADP in the presence of a proton or sodium gradient. F-type ATPases consist of two structural domains, F(1) containing the extramembraneous catalytic core and F(0) containing the membrane proton channel, linked together by a central stalk and a peripheral stalk. During catalysis, ATP synthesis in the catalytic domain of F(1) is coupled via a rotary mechanism of the central stalk subunits to proton translocation. Functionally, component of the F(0) channel, it forms part of the peripheral stalk, linking F(1) to F(0). The b'-subunit is a diverged and duplicated form of b found in plants and photosynthetic bacteria. The protein is ATP synthase subunit b 2 (atpF2) of Rhodospirillum centenum (strain ATCC 51521 / SW).